Reading from the N-terminus, the 539-residue chain is Hydroxylamine reductase (539 aa).

Residues cysteine 3, cysteine 6, cysteine 15, and cysteine 21 each coordinate [4Fe-4S] cluster. Hybrid [4Fe-2O-2S] cluster-binding residues include histidine 235, glutamate 259, cysteine 303, cysteine 394, cysteine 422, cysteine 447, glutamate 482, and lysine 484. The residue at position 394 (cysteine 394) is a Cysteine persulfide.

Belongs to the HCP family. The cofactor is [4Fe-4S] cluster. It depends on hybrid [4Fe-2O-2S] cluster as a cofactor.

It is found in the cytoplasm. It carries out the reaction A + NH4(+) + H2O = hydroxylamine + AH2 + H(+). Catalyzes the reduction of hydroxylamine to form NH(3) and H(2)O. This chain is Hydroxylamine reductase, found in Methanocaldococcus jannaschii (strain ATCC 43067 / DSM 2661 / JAL-1 / JCM 10045 / NBRC 100440) (Methanococcus jannaschii).